The sequence spans 476 residues: Membrane-bound lytic murein transglycosylase F (476 aa).

Positions 1–22 (MTRFLFALILGFLLTACQQVTV) are cleaved as a signal peptide. A non-LT domain region spans residues 23-257 (DETEFVPKKL…HLNEKYFGHV (235 aa)). Residues 258 to 476 (KRFDYVDTRA…AGTLSPEQPK (219 aa)) are LT domain. Glu-302 is a catalytic residue. The interval 446–476 (SKQQNPEEEPSDLASEEPAIPAGTLSPEQPK) is disordered. The span at 451-460 (PEEEPSDLAS) shows a compositional bias: acidic residues.

It in the N-terminal section; belongs to the bacterial solute-binding protein 3 family. The protein in the C-terminal section; belongs to the transglycosylase Slt family.

It localises to the cell outer membrane. It carries out the reaction Exolytic cleavage of the (1-&gt;4)-beta-glycosidic linkage between N-acetylmuramic acid (MurNAc) and N-acetylglucosamine (GlcNAc) residues in peptidoglycan, from either the reducing or the non-reducing ends of the peptidoglycan chains, with concomitant formation of a 1,6-anhydrobond in the MurNAc residue.. Functionally, murein-degrading enzyme that degrades murein glycan strands and insoluble, high-molecular weight murein sacculi, with the concomitant formation of a 1,6-anhydromuramoyl product. Lytic transglycosylases (LTs) play an integral role in the metabolism of the peptidoglycan (PG) sacculus. Their lytic action creates space within the PG sacculus to allow for its expansion as well as for the insertion of various structures such as secretion systems and flagella. The polypeptide is Membrane-bound lytic murein transglycosylase F (Shewanella baltica (strain OS155 / ATCC BAA-1091)).